Consider the following 424-residue polypeptide: Histidine--tRNA ligase (424 aa).

This sequence belongs to the class-II aminoacyl-tRNA synthetase family. Homodimer.

It localises to the cytoplasm. It carries out the reaction tRNA(His) + L-histidine + ATP = L-histidyl-tRNA(His) + AMP + diphosphate + H(+). The polypeptide is Histidine--tRNA ligase (Salmonella typhi).